The primary structure comprises 216 residues: 3-isopropylmalate dehydratase small subunit (216 aa).

The protein belongs to the LeuD family. LeuD type 1 subfamily. As to quaternary structure, heterodimer of LeuC and LeuD.

The enzyme catalyses (2R,3S)-3-isopropylmalate = (2S)-2-isopropylmalate. It functions in the pathway amino-acid biosynthesis; L-leucine biosynthesis; L-leucine from 3-methyl-2-oxobutanoate: step 2/4. Catalyzes the isomerization between 2-isopropylmalate and 3-isopropylmalate, via the formation of 2-isopropylmaleate. The polypeptide is 3-isopropylmalate dehydratase small subunit (Bordetella avium (strain 197N)).